The primary structure comprises 230 residues: TorCAD operon transcriptional regulatory protein TorR (230 aa).

The Response regulatory domain occupies 4 to 117 (HIVIVEDEPV…ELVVRVKNLL (114 aa)). 4-aspartylphosphate is present on aspartate 53. A DNA-binding region (ompR/PhoB-type) is located at residues 132–227 (DNCYRFAGYC…QHGEGYFLAA (96 aa)).

In terms of processing, phosphorylated and dephosphorylated by TorS.

It localises to the cytoplasm. Member of the two-component regulatory system TorS/TorR involved in the anaerobic utilization of trimethylamine-N-oxide (TMAO). Phosphorylated TorR activates the transcription of the torCAD operon by binding to four decameric boxes located in the torCAD promoter. Box1, 2 and 4 contain the DNA sequence 5'-CTGTTCATAT-3' and box3 contains the DNA sequence 5'-CCGTTCATCC-3'. Phosphorylated as well as unphosphorylated TorR negatively regulates its own expression by binding to box1 and 2. The polypeptide is TorCAD operon transcriptional regulatory protein TorR (torR) (Escherichia coli O157:H7).